The following is a 459-amino-acid chain: Putrescine aminotransferase (459 aa).

Residues 150 to 151 (GT) and Gln274 contribute to the pyridoxal 5'-phosphate site. An N6-(pyridoxal phosphate)lysine modification is found at Lys300. Thr332 is a pyridoxal 5'-phosphate binding site.

It belongs to the class-III pyridoxal-phosphate-dependent aminotransferase family. Putrescine aminotransferase subfamily. It depends on pyridoxal 5'-phosphate as a cofactor.

The enzyme catalyses an alkane-alpha,omega-diamine + 2-oxoglutarate = an omega-aminoaldehyde + L-glutamate. The catalysed reaction is putrescine + 2-oxoglutarate = 1-pyrroline + L-glutamate + H2O. It catalyses the reaction cadaverine + 2-oxoglutarate = 5-aminopentanal + L-glutamate. It participates in amine and polyamine degradation; putrescine degradation; 4-aminobutanal from putrescine (transaminase route): step 1/1. Catalyzes the aminotransferase reaction from putrescine to 2-oxoglutarate, leading to glutamate and 4-aminobutanal, which spontaneously cyclizes to form 1-pyrroline. This is the first step in one of two pathways for putrescine degradation, where putrescine is converted into 4-aminobutanoate (gamma-aminobutyrate or GABA) via 4-aminobutanal. Also functions as a cadaverine transaminase in a a L-lysine degradation pathway to succinate that proceeds via cadaverine, glutarate and L-2-hydroxyglutarate. This is Putrescine aminotransferase from Salmonella heidelberg (strain SL476).